Here is a 517-residue protein sequence, read N- to C-terminus: MANDQNKDYDKIIVLDYGSQYNQLITRRIREFGIYSELKPHTITAAEVKKIAPKGIIFSGGPNSVYDEGALGVDEDLFKLGIPILGVCYGMQLMAQRLGGDVEPADNREYGKADIEVTDDSAKLFRDLPKDQTVWMSHGDLVTRVPEGFRRTATSINCPISAMDDDDRKFYGIQFHAEVQNTQYGHEILHHFAFDICKAEANWSMDDFITKQIDKIRAEVGDKRVLLGLSGGVDSSVVGVLLHKAIGTQLTSIFVDHGLLRKGEADQVMESLKGKFGLNIIKVNAKDRFLGDLKGVTDPEKKRKIIGRDFIEVFNEEAAKLNGIDFLAQGTLYTDVVESGTDTAQTIKSHHNVGGLPEDLKFKLIEPLNKLFKDEVRELGEKLGMPHALVWRQPFPGPGLGIRVIGEVTEDKLEIVRDSDYILREEIAKHGLDKDIWQYFTVLPGFRSVGVMGDGRTYDYTIGIRAITSIDGMTADFARINWDVLQEISSRIVNEVKNVNRVVYDITSKPPATIEWE.

Positions 11-202 (KIIVLDYGSQ…AFDICKAEAN (192 aa)) constitute a Glutamine amidotransferase type-1 domain. Cys88 (nucleophile) is an active-site residue. Residues His176 and Glu178 contribute to the active site. The region spanning 203-392 (WSMDDFITKQ…LGMPHALVWR (190 aa)) is the GMPS ATP-PPase domain. 230–236 (SGGVDSS) provides a ligand contact to ATP.

As to quaternary structure, homodimer.

The enzyme catalyses XMP + L-glutamine + ATP + H2O = GMP + L-glutamate + AMP + diphosphate + 2 H(+). Its pathway is purine metabolism; GMP biosynthesis; GMP from XMP (L-Gln route): step 1/1. Its function is as follows. Catalyzes the synthesis of GMP from XMP. The protein is GMP synthase [glutamine-hydrolyzing] of Lacticaseibacillus casei (strain BL23) (Lactobacillus casei).